We begin with the raw amino-acid sequence, 311 residues long: HPr kinase/phosphorylase (311 aa).

Residues His-136 and Lys-157 contribute to the active site. Residue 151–158 coordinates ATP; sequence GDSGIGKS. Ser-158 lines the Mg(2+) pocket. The active-site Proton acceptor; for phosphorylation activity. Proton donor; for dephosphorylation activity is the Asp-175. The interval 199–208 is important for the catalytic mechanism of both phosphorylation and dephosphorylation; sequence LEIRGLGIIN. Glu-200 provides a ligand contact to Mg(2+). Arg-241 is an active-site residue. An important for the catalytic mechanism of dephosphorylation region spans residues 262-267; the sequence is PVRPGR.

It belongs to the HPrK/P family. In terms of assembly, homohexamer. Mg(2+) is required as a cofactor.

It carries out the reaction [HPr protein]-L-serine + ATP = [HPr protein]-O-phospho-L-serine + ADP + H(+). It catalyses the reaction [HPr protein]-O-phospho-L-serine + phosphate + H(+) = [HPr protein]-L-serine + diphosphate. Its function is as follows. Catalyzes the ATP- as well as the pyrophosphate-dependent phosphorylation of a specific serine residue in HPr, a phosphocarrier protein of the phosphoenolpyruvate-dependent sugar phosphotransferase system (PTS). HprK/P also catalyzes the pyrophosphate-producing, inorganic phosphate-dependent dephosphorylation (phosphorolysis) of seryl-phosphorylated HPr (P-Ser-HPr). The two antagonistic activities of HprK/P are regulated by several intracellular metabolites, which change their concentration in response to the absence or presence of rapidly metabolisable carbon sources (glucose, fructose, etc.) in the growth medium. Therefore, by controlling the phosphorylation state of HPr, HPrK/P is a sensor enzyme that plays a major role in the regulation of carbon metabolism and sugar transport: it mediates carbon catabolite repression (CCR), and regulates PTS-catalyzed carbohydrate uptake and inducer exclusion. In Staphylococcus haemolyticus (strain JCSC1435), this protein is HPr kinase/phosphorylase.